A 512-amino-acid chain; its full sequence is Hyaluronidase PH-20 (512 aa).

The signal sequence occupies residues 1–35; that stretch reads MGELQFKWLFWRSFAESGGTFQTVLIFLFIPYSLT. 2 cysteine pairs are disulfide-bonded: Cys-60–Cys-351 and Cys-223–Cys-237. N-linked (GlcNAc...) asparagine glycosylation occurs at Asn-63. Glu-147 serves as the catalytic Proton donor. 2 N-linked (GlcNAc...) asparagine glycosylation sites follow: Asn-165 and Asn-179. The N-linked (GlcNAc...) asparagine glycan is linked to Asn-368. Disulfide bonds link Cys-376/Cys-387, Cys-381/Cys-435, and Cys-437/Cys-464. An N-linked (GlcNAc...) asparagine glycan is attached at Asn-408.

The protein belongs to the glycosyl hydrolase 56 family.

The protein resides in the cell membrane. The enzyme catalyses Random hydrolysis of (1-&gt;4)-linkages between N-acetyl-beta-D-glucosamine and D-glucuronate residues in hyaluronate.. In terms of biological role, involved in sperm-egg adhesion. Upon fertilization sperm must first penetrate a layer of cumulus cells that surrounds the egg before reaching the zona pellucida. The cumulus cells are embedded in a matrix containing hyaluronic acid which is formed prior to ovulation. This protein aids in penetrating the layer of cumulus cells by digesting hyaluronic acid. The polypeptide is Hyaluronidase PH-20 (Spam1) (Rattus norvegicus (Rat)).